The following is a 427-amino-acid chain: Glutamate-1-semialdehyde 2,1-aminomutase (427 aa).

Position 265 is an N6-(pyridoxal phosphate)lysine (K265).

Belongs to the class-III pyridoxal-phosphate-dependent aminotransferase family. HemL subfamily. Homodimer. Pyridoxal 5'-phosphate is required as a cofactor.

It is found in the cytoplasm. The enzyme catalyses (S)-4-amino-5-oxopentanoate = 5-aminolevulinate. The protein operates within porphyrin-containing compound metabolism; protoporphyrin-IX biosynthesis; 5-aminolevulinate from L-glutamyl-tRNA(Glu): step 2/2. This Neisseria meningitidis serogroup C / serotype 2a (strain ATCC 700532 / DSM 15464 / FAM18) protein is Glutamate-1-semialdehyde 2,1-aminomutase.